The chain runs to 891 residues: Dynein axonemal intermediate chain 3 (891 aa).

Positions 1–16 (MAPKQKKKSSRRKKSP) are enriched in basic residues. A disordered region spans residues 1 to 27 (MAPKQKKKSSRRKKSPKPILAASEDME). WD repeat units lie at residues 395 to 435 (ESPD…DRIE), 477 to 533 (GHKR…PLTP), 670 to 709 (IHDG…GPLL), and 713 to 753 (CAPK…HEPA). Residues 817-861 (HLEYVEQRKKIREQEKKEMEQEMAKKKVKIYQKSKEQMEAELKMD) are a coiled coil.

Interacts with ACTR2; this interaction reduces binding of the Arp2/3 complex to the VCA domain of nucleation promoting factors. Part of the multisubunit axonemal dynein complex formed at least of two heavy chains and a number of intermediate and light chains. Found in a associated with the catalytic heavy chain DNAH2, the intermediate chain DNAI4, and the light chain DYNLT1.

Its subcellular location is the cytoplasm. Its function is as follows. Acts as a negative regulator of cell migration, invasion, and metastasis downstream of p53/TP53, through inhibition of Arp2/3 complex-mediated actin polymerization. Via its association with the multisubunit axonemal dynein complex, is potentially involved in the regulation of cilia function. May play a role in osteogenesis of dental tissue-derived mesenchymal stem cells. The chain is Dynein axonemal intermediate chain 3 (DNAI3) from Macaca fascicularis (Crab-eating macaque).